We begin with the raw amino-acid sequence, 105 residues long: Small ribosomal subunit protein uS10 (105 aa).

This sequence belongs to the universal ribosomal protein uS10 family. In terms of assembly, part of the 30S ribosomal subunit.

Involved in the binding of tRNA to the ribosomes. In Rickettsia akari (strain Hartford), this protein is Small ribosomal subunit protein uS10.